The primary structure comprises 409 residues: MLGSTGSIGTQTLQIAEEFPEQFRVVALTAGQNLDLLVQQIQRHQPELVALANADLLPELQQRLDALGTDRKRPQLVGGPDGLNIAASWESADLVVTGIVGCAGLLPTLAAVRAGKDLALANKETLIAAGPVVLPELKKSGSRLLPADSEHSAIFQCLQGTPWAENARLSTGVPTPGLRRIQLTASGGAFRDWKAEDLENATVADATSHPNWSMGRKITVDSASLMNKGLEVIEAHYLFGLDYDHIEIVIHPQSIIHSMIELADSSVLAQLGWPDMKLPILYCLSWPSRLETPWRRLDLTEVGQLSFRAPDPAKYPCMQLAYAAGRAGGTMPAVMNAANEEAVAQFLEEKIHFLDIPVVIEAACERHKADLIAHPQLEDVLAVDQWARMAVREQVKRGTTRVPLAALAA.

Residues threonine 5, glycine 6, serine 7, isoleucine 8, glycine 31, asparagine 33, and asparagine 122 each contribute to the NADPH site. Residue lysine 123 participates in 1-deoxy-D-xylulose 5-phosphate binding. An NADPH-binding site is contributed by glutamate 124. A Mn(2+)-binding site is contributed by aspartate 148. Residues serine 149, glutamate 150, serine 186, and histidine 209 each coordinate 1-deoxy-D-xylulose 5-phosphate. Position 150 (glutamate 150) interacts with Mn(2+). Glycine 215 contacts NADPH. 4 residues coordinate 1-deoxy-D-xylulose 5-phosphate: serine 222, asparagine 227, lysine 228, and glutamate 231. Residue glutamate 231 coordinates Mn(2+).

It belongs to the DXR family. The cofactor is Mg(2+). Requires Mn(2+) as cofactor.

It catalyses the reaction 2-C-methyl-D-erythritol 4-phosphate + NADP(+) = 1-deoxy-D-xylulose 5-phosphate + NADPH + H(+). It functions in the pathway isoprenoid biosynthesis; isopentenyl diphosphate biosynthesis via DXP pathway; isopentenyl diphosphate from 1-deoxy-D-xylulose 5-phosphate: step 1/6. Its function is as follows. Catalyzes the NADPH-dependent rearrangement and reduction of 1-deoxy-D-xylulose-5-phosphate (DXP) to 2-C-methyl-D-erythritol 4-phosphate (MEP). The polypeptide is 1-deoxy-D-xylulose 5-phosphate reductoisomerase (Parasynechococcus marenigrum (strain WH8102)).